A 976-amino-acid polypeptide reads, in one-letter code: Apical junction component 1 homolog (976 aa).

Residues 21-49 (ATPGPASKCSPCERSVARPAEPAPFNKRH) are disordered. Position 52 is a phosphoserine (Ser-52). Disordered regions lie at residues 61–136 (GPAM…EPAY), 220–242 (PQFH…PTPS), and 264–294 (YAER…RGSF). Positions 98–113 (RAPPGLTPAPASPPVL) are enriched in pro residues. Residues 116–134 (RGREAQRAARAEASPRREP) show a composition bias toward basic and acidic residues. Residue Ser-129 is modified to Phosphoserine. Residue Arg-322 is modified to Omega-N-methylarginine. Residues 412-443 (LQVVPPSDPDPLLASWHGGTGTSPPRLATDSR) form a disordered region. Phosphoserine is present on residues Ser-468, Ser-509, and Ser-512. Disordered regions lie at residues 539–574 (DLRA…SGRQ) and 614–660 (LDSR…ADED). Composition is skewed to low complexity over residues 616–625 (SRPAGSGAPA) and 633–655 (PASA…SPEP). Position 749 is an asymmetric dimethylarginine; alternate (Arg-749). An Omega-N-methylarginine; alternate modification is found at Arg-749. The interval 855-888 (GSPARPPPARSREPDMETLILTPPPGTAGLDQDG) is disordered.

It localises to the apical cell membrane. Its subcellular location is the cell projection. It is found in the cilium. The protein resides in the cell junction. The protein localises to the adherens junction. Its function is as follows. May be involved in the control of adherens junction integrity. The polypeptide is Apical junction component 1 homolog (Homo sapiens (Human)).